The sequence spans 316 residues: MGQDYYSVLGITRNSEDAQIKQAYRRLALKHHPLKSNEPSSAEIFRQIAEAYDVLSDPMKRGIYDKFGEEGLKGGIPLEFGSQTPWTTGYVFHGKPEKVFHEFFGGNNPFSEFFDAEGSEVDLNFGGLQGRGVKKQDPQVERDLYLSLEDLFFGCTKKIKISRRVLNEDGYSSTIKDKILTIDVKPGWRQGTRITFEKEGDQGPNIIPADIIFIVKEKLHPRFRRENDNLFFVNPIPLGKALTCCTVEVRTLDDRLLNIPINDIIHPKYFKKVPGEGMPLPEDPTKKGDLFIFFDIQFPTRLTPQKKQMLRQALLT.

The J domain occupies Asp-4–Gly-68.

Homodimer. Component of the axonemal radial spoke complex 1 (RS1), at least composed of spoke head proteins RSPH1, RSPH3, RSPH9 and the cilia-specific component RSPH4A or sperm-specific component RSPH6A, spoke stalk proteins RSPH14, DNAJB13, DYDC1, ROPN1L and NME5, and the anchor protein IQUB. Interacts with SUN5. Interacts with IQUB. Specifically expressed in testis and trachea.

The protein resides in the cell projection. Its subcellular location is the cilium. The protein localises to the flagellum. Functions as part of axonemal radial spoke complexes that play an important part in the motility of sperm and cilia. This is DnaJ homolog subfamily B member 13 (DNAJB13) from Homo sapiens (Human).